The following is a 354-amino-acid chain: Magnesium-protoporphyrin IX monomethyl ester [oxidative] cyclase 2 (354 aa).

The protein belongs to the AcsF family. It depends on Fe cation as a cofactor.

The catalysed reaction is Mg-protoporphyrin IX 13-monomethyl ester + 3 NADPH + 3 O2 + 2 H(+) = 3,8-divinyl protochlorophyllide a + 3 NADP(+) + 5 H2O. Its pathway is porphyrin-containing compound metabolism; chlorophyll biosynthesis (light-independent). Functionally, catalyzes the formation of the isocyclic ring in chlorophyll biosynthesis. Mediates the cyclase reaction, which results in the formation of divinylprotochlorophyllide (Pchlide) characteristic of all chlorophylls from magnesium-protoporphyrin IX 13-monomethyl ester (MgPMME). This chain is Magnesium-protoporphyrin IX monomethyl ester [oxidative] cyclase 2, found in Thermosynechococcus vestitus (strain NIES-2133 / IAM M-273 / BP-1).